A 254-amino-acid chain; its full sequence is Triosephosphate isomerase (254 aa).

Substrate is bound at residue Asn-12 to Lys-14. The active-site Electrophile is the His-99. Catalysis depends on Glu-169, which acts as the Proton acceptor. Substrate contacts are provided by residues Gly-175, Ser-214, and Gly-235–Gly-236.

This sequence belongs to the triosephosphate isomerase family. As to quaternary structure, homodimer.

Its subcellular location is the cytoplasm. It carries out the reaction D-glyceraldehyde 3-phosphate = dihydroxyacetone phosphate. Its pathway is carbohydrate biosynthesis; gluconeogenesis. The protein operates within carbohydrate degradation; glycolysis; D-glyceraldehyde 3-phosphate from glycerone phosphate: step 1/1. Involved in the gluconeogenesis. Catalyzes stereospecifically the conversion of dihydroxyacetone phosphate (DHAP) to D-glyceraldehyde-3-phosphate (G3P). This is Triosephosphate isomerase from Brucella abortus biovar 1 (strain 9-941).